A 239-amino-acid chain; its full sequence is mRNA turnover protein 4 homolog (239 aa).

The tract at residues 216–239 (QQMGDDLPESAPESEGESEEEDDS) is disordered. Over residues 221–239 (DLPESAPESEGESEEEDDS) the composition is skewed to acidic residues. A phosphoserine mark is found at Ser-225, Ser-229, and Ser-233.

This sequence belongs to the universal ribosomal protein uL10 family. Associates with the pre-60S ribosomal particle. Interacts with MINAS-60 (product of an alternative open reading frame of RBM10).

It localises to the nucleus. The protein resides in the nucleolus. Its subcellular location is the cytoplasm. Component of the ribosome assembly machinery. Nuclear paralog of the ribosomal protein P0, it binds pre-60S subunits at an early stage of assembly in the nucleolus, and is replaced by P0 in cytoplasmic pre-60S subunits and mature 80S ribosomes. This is mRNA turnover protein 4 homolog (MRTO4) from Bos taurus (Bovine).